A 351-amino-acid polypeptide reads, in one-letter code: Prohormone-2 (351 aa).

The signal sequence occupies residues methionine 1–serine 21. 2 propeptides span residues leucine 22 to valine 177 and glutamate 192 to arginine 319. Positions glycine 51–threonine 69 are enriched in polar residues. Disordered regions lie at residues glycine 51–glutamate 71 and asparagine 136–glutamine 176. A compositionally biased stretch (basic and acidic residues) spans asparagine 136–lysine 145. The segment covering proline 158–glutamine 176 has biased composition (low complexity).

It localises to the secreted. The sequence is that of Prohormone-2 from Apis mellifera (Honeybee).